Here is a 160-residue protein sequence, read N- to C-terminus: SsrA-binding protein (160 aa).

Belongs to the SmpB family.

The protein localises to the cytoplasm. Required for rescue of stalled ribosomes mediated by trans-translation. Binds to transfer-messenger RNA (tmRNA), required for stable association of tmRNA with ribosomes. tmRNA and SmpB together mimic tRNA shape, replacing the anticodon stem-loop with SmpB. tmRNA is encoded by the ssrA gene; the 2 termini fold to resemble tRNA(Ala) and it encodes a 'tag peptide', a short internal open reading frame. During trans-translation Ala-aminoacylated tmRNA acts like a tRNA, entering the A-site of stalled ribosomes, displacing the stalled mRNA. The ribosome then switches to translate the ORF on the tmRNA; the nascent peptide is terminated with the 'tag peptide' encoded by the tmRNA and targeted for degradation. The ribosome is freed to recommence translation, which seems to be the essential function of trans-translation. This is SsrA-binding protein from Novosphingobium aromaticivorans (strain ATCC 700278 / DSM 12444 / CCUG 56034 / CIP 105152 / NBRC 16084 / F199).